We begin with the raw amino-acid sequence, 339 residues long: Glycerol-3-phosphate dehydrogenase [NAD(P)+] (339 aa).

4 residues coordinate NADPH: serine 15, tyrosine 16, histidine 36, and lysine 110. The sn-glycerol 3-phosphate site is built by lysine 110, glycine 139, and threonine 141. Position 143 (alanine 143) interacts with NADPH. Lysine 195, aspartate 248, serine 258, arginine 259, and asparagine 260 together coordinate sn-glycerol 3-phosphate. Lysine 195 acts as the Proton acceptor in catalysis. Arginine 259 is an NADPH binding site. NADPH is bound by residues valine 283 and glutamate 285.

It belongs to the NAD-dependent glycerol-3-phosphate dehydrogenase family.

Its subcellular location is the cytoplasm. The catalysed reaction is sn-glycerol 3-phosphate + NAD(+) = dihydroxyacetone phosphate + NADH + H(+). It catalyses the reaction sn-glycerol 3-phosphate + NADP(+) = dihydroxyacetone phosphate + NADPH + H(+). The protein operates within membrane lipid metabolism; glycerophospholipid metabolism. Catalyzes the reduction of the glycolytic intermediate dihydroxyacetone phosphate (DHAP) to sn-glycerol 3-phosphate (G3P), the key precursor for phospholipid synthesis. The polypeptide is Glycerol-3-phosphate dehydrogenase [NAD(P)+] (Shigella flexneri serotype 5b (strain 8401)).